We begin with the raw amino-acid sequence, 60 residues long: MSDKKIKVTLVKSVIGTKQSHRATVRGLGLRRLNHTVELVDTPAVRGMVTKVAYLVKVEA.

It belongs to the universal ribosomal protein uL30 family. As to quaternary structure, part of the 50S ribosomal subunit.

This is Large ribosomal subunit protein uL30 from Azoarcus sp. (strain BH72).